A 398-amino-acid polypeptide reads, in one-letter code: ATP-dependent (S)-NAD(P)H-hydrate dehydratase 1 (398 aa).

Residues 80–391 (LLRKAFQMIP…GYIGEAFELV (312 aa)) form the YjeF C-terminal domain. (6S)-NADPHX-binding positions include Gly-187 and 240–246 (NHVEFQR). ATP is bound by residues 280–284 (KGSID) and 300–309 (GSPKRCGGQG). Position 310 (Asp-310) interacts with (6S)-NADPHX.

This sequence belongs to the NnrD/CARKD family. The cofactor is Mg(2+).

It is found in the cytoplasm. It catalyses the reaction (6S)-NADHX + ATP = ADP + phosphate + NADH + H(+). It carries out the reaction (6S)-NADPHX + ATP = ADP + phosphate + NADPH + H(+). Its function is as follows. Catalyzes the dehydration of the S-form of NAD(P)HX at the expense of ATP, which is converted to ADP. Together with NAD(P)HX epimerase, which catalyzes the epimerization of the S- and R-forms, the enzyme allows the repair of both epimers of NAD(P)HX, a damaged form of NAD(P)H that is a result of enzymatic or heat-dependent hydration. The chain is ATP-dependent (S)-NAD(P)H-hydrate dehydratase 1 from Puccinia graminis f. sp. tritici (strain CRL 75-36-700-3 / race SCCL) (Black stem rust fungus).